An 88-amino-acid chain; its full sequence is UPF0250 protein Sama_2593 (88 aa).

The protein belongs to the UPF0250 family.

The polypeptide is UPF0250 protein Sama_2593 (Shewanella amazonensis (strain ATCC BAA-1098 / SB2B)).